The primary structure comprises 1032 residues: Vacuolar membrane protease (1032 aa).

The Cytoplasmic segment spans residues 1-11; the sequence is MRFQNPFAFRP. Residues 12–32 form a helical membrane-spanning segment; the sequence is GPVSFWTTVIYLALVIPLIYV. Topologically, residues 33–426 are vacuolar; it reads HETVPPAPSD…AWAVFALRGL (394 aa). Residues asparagine 50 and asparagine 142 are each glycosylated (N-linked (GlcNAc...) asparagine). Positions 207 and 219 each coordinate Zn(2+). The active-site Proton acceptor is the glutamate 253. Positions 254, 279, and 352 each coordinate Zn(2+). A helical membrane pass occupies residues 427 to 447; sequence FAWSLTLLVATPLILVAITYI. Over 448-482 the chain is Cytoplasmic; sequence LARKDKYYFFSRDIKMHHDINDDPVVLGGWKGFLR. A helical transmembrane segment spans residues 483–503; it reads FPFALVFAGALTIASTLLLAK. Residues 504-511 lie on the Vacuolar side of the membrane; that stretch reads FNPLIIYS. Residues 512–532 form a helical membrane-spanning segment; sequence SPYAVWSMTLSIFYFSFWLIM. Residues 533-545 lie on the Cytoplasmic side of the membrane; sequence RGASFIRPSALHR. Residues 546–566 form a helical membrane-spanning segment; that stretch reads GYVLIWLFALGWGLQVVGAVA. The Vacuolar segment spans residues 567-573; that stretch reads EDRLHIA. Residues 574-594 form a helical membrane-spanning segment; sequence ALYATVFLQSAVFLALFISLL. The Cytoplasmic segment spans residues 595 to 708; sequence EQFALLGKHD…WSGRLPSWTW (114 aa). The span at 616 to 631 shows a compositional bias: basic and acidic residues; that stretch reads RDISSHGTDHESRPQP. Positions 616-666 are disordered; the sequence is RDISSHGTDHESRPQPEEEPAQPEGDEDESEDATETTPLRANEPGYGSSTR. The span at 632-649 shows a compositional bias: acidic residues; that stretch reads EEEPAQPEGDEDESEDAT. A helical membrane pass occupies residues 709-729; it reads IIQFLLLAPVPVILFGNLGLV. The Vacuolar portion of the chain corresponds to 730 to 745; it reads AMSALQMTGTDGGSLL. A helical membrane pass occupies residues 746-766; sequence VPVLTLGIVSIFLLLPLTPFI. Over 767–773 the chain is Cytoplasmic; sequence HRVSHHV. Residues 774-794 form a helical membrane-spanning segment; that stretch reads PMFLLCVFAGTFIYNLVAFPF. The Vacuolar portion of the chain corresponds to 795 to 1032; sequence SDSHRFKFYF…LVEVRKTYKV (238 aa). 2 N-linked (GlcNAc...) asparagine glycosylation sites follow: asparagine 812 and asparagine 884.

Belongs to the peptidase M28 family. The cofactor is Zn(2+).

The protein localises to the vacuole membrane. Functionally, may be involved in vacuolar sorting and osmoregulation. The protein is Vacuolar membrane protease of Fusarium vanettenii (strain ATCC MYA-4622 / CBS 123669 / FGSC 9596 / NRRL 45880 / 77-13-4) (Fusarium solani subsp. pisi).